Here is a 238-residue protein sequence, read N- to C-terminus: Ribonuclease 3 (238 aa).

The region spanning 17–140 is the RNase III domain; that stretch reads YATLEKALGY…LMAGVYLEAG (124 aa). Glutamate 53 is a binding site for Mg(2+). Residue aspartate 57 is part of the active site. Mg(2+) is bound by residues serine 126 and glutamate 129. Residue glutamate 129 is part of the active site. Residues 167–236 form the DRBM domain; it reads DYKTALQELT…AYQALQKLKE (70 aa).

This sequence belongs to the ribonuclease III family. Homodimer. It depends on Mg(2+) as a cofactor.

Its subcellular location is the cytoplasm. It carries out the reaction Endonucleolytic cleavage to 5'-phosphomonoester.. Its function is as follows. Digests double-stranded RNA. Involved in the processing of primary rRNA transcript to yield the immediate precursors to the large and small rRNAs (23S and 16S). Processes some mRNAs, and tRNAs when they are encoded in the rRNA operon. Processes pre-crRNA and tracrRNA of type II CRISPR loci if present in the organism. This chain is Ribonuclease 3, found in Helicobacter pylori (strain Shi470).